The following is a 466-amino-acid chain: uncharacterized protein (466 aa).

In terms of domain architecture, Autotransporter spans 178 to 466 (SQGSASSMWM…QGMLGVKYSW (289 aa)).

This is an uncharacterized protein from Escherichia coli (strain K12).